Here is a 358-residue protein sequence, read N- to C-terminus: DNA replication and repair protein RecF (358 aa).

An ATP-binding site is contributed by 30–37 (GNNGSGKT).

This sequence belongs to the RecF family.

It is found in the cytoplasm. Its function is as follows. The RecF protein is involved in DNA metabolism; it is required for DNA replication and normal SOS inducibility. RecF binds preferentially to single-stranded, linear DNA. It also seems to bind ATP. This is DNA replication and repair protein RecF from Histophilus somni (strain 129Pt) (Haemophilus somnus).